The primary structure comprises 230 residues: UPF0173 metal-dependent hydrolase TM1040_1920 (230 aa).

The protein belongs to the UPF0173 family.

The sequence is that of UPF0173 metal-dependent hydrolase TM1040_1920 from Ruegeria sp. (strain TM1040) (Silicibacter sp.).